The sequence spans 147 residues: Ubiquitin-conjugating enzyme E2 4 (147 aa).

The 147-residue stretch at 1-147 (MALKRINREL…AREWTRKYAI (147 aa)) folds into the UBC core domain. Cysteine 85 serves as the catalytic Glycyl thioester intermediate.

The protein belongs to the ubiquitin-conjugating enzyme family. As to quaternary structure, interacts with the E1 ubiquitin-activating enzyme ptr3 and E3 ubiquitin-protein ligase pub2.

It carries out the reaction S-ubiquitinyl-[E1 ubiquitin-activating enzyme]-L-cysteine + [E2 ubiquitin-conjugating enzyme]-L-cysteine = [E1 ubiquitin-activating enzyme]-L-cysteine + S-ubiquitinyl-[E2 ubiquitin-conjugating enzyme]-L-cysteine.. It participates in protein modification; protein ubiquitination. Its function is as follows. E2 ubiquitin-conjugating enzyme that catalyzes the covalent attachment of ubiquitin to other proteins. Mediates the selective degradation of short-lived and abnormal proteins. Mediates ubiquitination of pex5. The protein is Ubiquitin-conjugating enzyme E2 4 (ubc4) of Schizosaccharomyces pombe (strain 972 / ATCC 24843) (Fission yeast).